Reading from the N-terminus, the 232-residue chain is 2,3-bisphosphoglycerate-dependent phosphoglycerate mutase (232 aa).

Substrate contacts are provided by residues 8–15, 21–22, arginine 60, 87–90, lysine 98, 114–115, and 183–184; these read RHGESLWN, TG, ERHY, RR, and GN. Histidine 9 (tele-phosphohistidine intermediate) is an active-site residue. Glutamate 87 serves as the catalytic Proton donor/acceptor.

It belongs to the phosphoglycerate mutase family. BPG-dependent PGAM subfamily.

The catalysed reaction is (2R)-2-phosphoglycerate = (2R)-3-phosphoglycerate. The protein operates within carbohydrate degradation; glycolysis; pyruvate from D-glyceraldehyde 3-phosphate: step 3/5. Functionally, catalyzes the interconversion of 2-phosphoglycerate and 3-phosphoglycerate. The polypeptide is 2,3-bisphosphoglycerate-dependent phosphoglycerate mutase (Clostridium beijerinckii (strain ATCC 51743 / NCIMB 8052) (Clostridium acetobutylicum)).